The primary structure comprises 615 residues: UvrABC system protein C (615 aa).

Residues 14-91 form the GIY-YIG domain; that stretch reads TSPGCYIHKD…IKENKPKYNI (78 aa). The region spanning 196-231 is the UVR domain; sequence NKIIDELKGKMAAAAQTMEFERAAEYRDLIQAIGTL.

This sequence belongs to the UvrC family. Interacts with UvrB in an incision complex.

Its subcellular location is the cytoplasm. Functionally, the UvrABC repair system catalyzes the recognition and processing of DNA lesions. UvrC both incises the 5' and 3' sides of the lesion. The N-terminal half is responsible for the 3' incision and the C-terminal half is responsible for the 5' incision. The polypeptide is UvrABC system protein C (Streptococcus pneumoniae serotype 19F (strain G54)).